Here is a 513-residue protein sequence, read N- to C-terminus: MAEPSVESSSPGGSATSDDHEFDPSADMLVHDFDDERTLEEEEMMEGERNFNSEIEDLNRESDMPIQELLSLYGYDGTIPLQEDDDDEDEEEEEEEGEDDDDVDNDDNSGCSGENKEETIKDSSGQEDDTQSSNDDPAPSVASQDPQELIRPRRCKYFDTNSEIEEESEEDEDYIPSEDWKKEIMVGSMFQAEIPAGICRYKENEKVYENDDQLLWNPDVLPEDKVIEFLNEASRRTGDEKGLDAIPEGSHIKDNEQALYELVKCNFDTEESLRRLRFNVKAAREELSVWTEEECRNFEQGLKVYGKDFHVIQANKVRTRSVGECVAFYYMWKKSERYDFFAQQTRFGKKKYNLHPGVTDYMDRLLDESESAASSRAPSPPPTASNSSTSQSEREDSTTSSSNQNGLSANGPGDIPSKDEAKPEGLHINGPTGGKKTPHTDLDTNGYETESLSLDPKVAHSTSRSENDFEEKNERPLKRRRINSNGKESPGSSEFFQEANSHGKLEELETLDD.

Residues 1–16 (MAEPSVESSSPGGSAT) are compositionally biased toward low complexity. The tract at residues 1–174 (MAEPSVESSS…EEESEEDEDY (174 aa)) is disordered. Composition is skewed to basic and acidic residues over residues 17–36 (SDDH…FDDE) and 46–63 (EGER…RESD). A compositionally biased stretch (acidic residues) spans 82 to 107 (QEDDDDEDEEEEEEEGEDDDDVDNDD). Residues 131–146 (QSSNDDPAPSVASQDP) are compositionally biased toward polar residues. Residues 157 to 261 (YFDTNSEIEE…IKDNEQALYE (105 aa)) form an interaction with HDAC1 region. The segment covering 162–174 (SEIEEESEEDEDY) has biased composition (acidic residues). Residues 182 to 280 (KEIMVGSMFQ…ESLRRLRFNV (99 aa)) form the ELM2 domain. The SANT domain maps to 285-337 (EELSVWTEEECRNFEQGLKVYGKDFHVIQANKVRTRSVGECVAFYYMWKKSER). Residues 368-513 (ESESAASSRA…KLEELETLDD (146 aa)) are disordered. 2 stretches are compositionally biased toward basic and acidic residues: residues 416–425 (PSKDEAKPEG) and 463–476 (SRSE…NERP). A compositionally biased stretch (polar residues) spans 483 to 500 (NSNGKESPGSSEFFQEAN).

Its subcellular location is the nucleus. In terms of biological role, transcriptional repressor regulating the expression of a number of genes. Probably functions through recruitment of histone deacetylases involved in chromatin silencing. The protein is Mesoderm induction early response protein 1 (MIER1) of Gallus gallus (Chicken).